Reading from the N-terminus, the 208-residue chain is Uracil phosphoribosyltransferase (208 aa).

5-phospho-alpha-D-ribose 1-diphosphate is bound by residues Arg78, Arg103, and 130 to 138 (DPMLATGGS). Residues Ile193 and 198–200 (GDA) contribute to the uracil site. A 5-phospho-alpha-D-ribose 1-diphosphate-binding site is contributed by Asp199.

The protein belongs to the UPRTase family. Mg(2+) is required as a cofactor.

It catalyses the reaction UMP + diphosphate = 5-phospho-alpha-D-ribose 1-diphosphate + uracil. Its pathway is pyrimidine metabolism; UMP biosynthesis via salvage pathway; UMP from uracil: step 1/1. Its activity is regulated as follows. Allosterically activated by GTP. In terms of biological role, catalyzes the conversion of uracil and 5-phospho-alpha-D-ribose 1-diphosphate (PRPP) to UMP and diphosphate. This Colwellia psychrerythraea (strain 34H / ATCC BAA-681) (Vibrio psychroerythus) protein is Uracil phosphoribosyltransferase.